The chain runs to 221 residues: Protein-L-isoaspartate O-methyltransferase (221 aa).

Residue serine 60 is part of the active site.

The protein belongs to the methyltransferase superfamily. L-isoaspartyl/D-aspartyl protein methyltransferase family.

Its subcellular location is the cytoplasm. The enzyme catalyses [protein]-L-isoaspartate + S-adenosyl-L-methionine = [protein]-L-isoaspartate alpha-methyl ester + S-adenosyl-L-homocysteine. In terms of biological role, catalyzes the methyl esterification of L-isoaspartyl residues in peptides and proteins that result from spontaneous decomposition of normal L-aspartyl and L-asparaginyl residues. It plays a role in the repair and/or degradation of damaged proteins. The protein is Protein-L-isoaspartate O-methyltransferase of Rhodospirillum centenum (strain ATCC 51521 / SW).